Reading from the N-terminus, the 435-residue chain is Protein deadpan (435 aa).

A compositionally biased stretch (low complexity) spans Gly-18–Gly-27. Residues Gly-18 to Met-48 are disordered. Positions Leu-40–Val-97 constitute a bHLH domain. The Orange domain occupies Phe-116–Leu-149. 2 disordered regions span residues Gln-305–Pro-334 and Ser-349–Ser-416. A compositionally biased stretch (low complexity) spans Ser-311–Ser-324. Composition is skewed to polar residues over residues Ser-355–Cys-378 and Leu-385–Gly-395. Residues Ser-407, Ser-408, and Ser-411 each carry the phosphoserine modification. The short motif at Trp-432–Trp-435 is the WRPW motif element.

In terms of assembly, homodimer. Heterodimer with E(spl)mgamma-HLH and E(spl). Transcription repression requires formation of a complex with the corepressor protein Groucho. Interacts (via bHLH motif) with sisA. Interacts with da.

It is found in the nucleus. Functionally, transcriptional repressor of genes that require a bHLH protein for their transcription. In the larval brain, required to maintain the self-renewal and identity of type II neuroblasts by regulating the expression of the transcriptional repressor erm together with other self-renewal transcriptional repressors such as klu and E(spl)mgamma-HLH. As part of its role in neuroblasts development, has been shown to be a direct target of the Notch signaling pathway, however might work also independently of N/Notch. In the developing larval and pupal brain, required for mushroom body differentiation. Involved in sex determination and SXL transcription repression when in complex with the corepressor protein Groucho. This Drosophila melanogaster (Fruit fly) protein is Protein deadpan (dpn).